A 147-amino-acid chain; its full sequence is Large ribosomal subunit protein uL15 (147 aa).

The tract at residues 1–62 (MDLNTLKPAL…GQMPLQRRLP (62 aa)) is disordered. Basic residues predominate over residues 30–39 (TATKGHKGQK).

It belongs to the universal ribosomal protein uL15 family. Part of the 50S ribosomal subunit.

Its function is as follows. Binds to the 23S rRNA. This Pelobacter propionicus (strain DSM 2379 / NBRC 103807 / OttBd1) protein is Large ribosomal subunit protein uL15.